A 433-amino-acid chain; its full sequence is Poly(A) ribonuclease POP2 (433 aa).

Residue M1 is modified to N-acetylmethionine. The disordered stretch occupies residues 78 to 98; that stretch reads LLTQQQQQQQQQQQPFNIGTP. Residues 81 to 91 show a composition bias toward low complexity; the sequence is QQQQQQQQQQQ. At T97 the chain carries Phosphothreonine; by YAK1. The a divalent metal cation site is built by S188, E190, D310, and Q394.

This sequence belongs to the CAF1 family. Subunit of the 1.0 MDa CCR4-NOT core complex that contains CCR4, CAF1, NOT1, NOT2, NOT3, NOT4, NOT5, CAF40 and CAF130. In the complex interacts with NOT1. The core complex probably is part of a less characterized 1.9 MDa CCR4-NOT complex. Mg(2+) is required as a cofactor.

It localises to the cytoplasm. It is found in the nucleus. It carries out the reaction Exonucleolytic cleavage of poly(A) to 5'-AMP.. Functionally, acts as a probably catalytic component of the CCR4-NOT core complex, which in the nucleus seems to be a general transcription factor, and in the cytoplasm the major mRNA deadenylase involved in mRNA turnover. In vitro, POP2 has 3'-exoribonuclease activity with a preference for poly(A) RNAs, but also degrades poly(U) and poly(C) RNAs. Is part of a glucose-sensing system involved in growth control in response to glucose availability. In Saccharomyces cerevisiae (strain ATCC 204508 / S288c) (Baker's yeast), this protein is Poly(A) ribonuclease POP2 (POP2).